The sequence spans 908 residues: Protein translocase subunit SecA (908 aa).

ATP-binding positions include Gln87, 105 to 109 (GEGKT), and Asp507. Positions 860 to 898 (EALGNAEESDEASDQSVKTFERAGAKVGRNDPCPCGSGK) are disordered. Cys892, Cys894, Cys903, and His904 together coordinate Zn(2+).

It belongs to the SecA family. As to quaternary structure, monomer and homodimer. Part of the essential Sec protein translocation apparatus which comprises SecA, SecYEG and auxiliary proteins SecDF-YajC and YidC. The cofactor is Zn(2+).

The protein localises to the cell inner membrane. The protein resides in the cytoplasm. It catalyses the reaction ATP + H2O + cellular proteinSide 1 = ADP + phosphate + cellular proteinSide 2.. Its function is as follows. Part of the Sec protein translocase complex. Interacts with the SecYEG preprotein conducting channel. Has a central role in coupling the hydrolysis of ATP to the transfer of proteins into and across the cell membrane, serving both as a receptor for the preprotein-SecB complex and as an ATP-driven molecular motor driving the stepwise translocation of polypeptide chains across the membrane. This Methylobacillus flagellatus (strain ATCC 51484 / DSM 6875 / VKM B-1610 / KT) protein is Protein translocase subunit SecA.